Reading from the N-terminus, the 680-residue chain is Glutamine-dependent NAD(+) synthetase (680 aa).

Positions 12-276 constitute a CN hydrolase domain; the sequence is VRVAACTHHA…EHRSVADVDT (265 aa). Glu52 serves as the catalytic Proton acceptor; for glutaminase activity. Lys121 serves as the catalytic For glutaminase activity. Tyr127 lines the L-glutamine pocket. Cys176 serves as the catalytic Nucleophile; for glutaminase activity. L-glutamine contacts are provided by Ser203 and Arg209. ATP is bound at residue 366–373; it reads GVSGGLDS. Residue Asn456 coordinates deamido-NAD(+). Thr480 contacts ATP. Residues Glu485, 490–493, and Lys636 contribute to the deamido-NAD(+) site; that span reads WSTY.

In the C-terminal section; belongs to the NAD synthetase family.

The catalysed reaction is deamido-NAD(+) + L-glutamine + ATP + H2O = L-glutamate + AMP + diphosphate + NAD(+) + H(+). It participates in cofactor biosynthesis; NAD(+) biosynthesis; NAD(+) from deamido-NAD(+) (L-Gln route): step 1/1. Functionally, catalyzes the ATP-dependent amidation of deamido-NAD to form NAD. Uses L-glutamine as a nitrogen source. The sequence is that of Glutamine-dependent NAD(+) synthetase from Mycobacterium leprae (strain TN).